Reading from the N-terminus, the 355-residue chain is Meiotic coiled-coil protein 4 (355 aa).

Residues 298–338 (QRLSRTEINKEIIEIEKLELEVVQFQMSIANLINTQVEVTN) are a coiled coil.

The protein resides in the cytoplasm. Its function is as follows. Has a role in meiosis. This is Meiotic coiled-coil protein 4 (mcp4) from Schizosaccharomyces pombe (strain 972 / ATCC 24843) (Fission yeast).